The following is a 75-amino-acid chain: Beta-defensin 30 (75 aa).

The signal sequence occupies residues 1 to 22 (MGSLQLTLVLFVLLSYVPPVRS). Intrachain disulfides connect Cys35/Cys62, Cys42/Cys56, and Cys46/Cys63.

It belongs to the beta-defensin family.

It localises to the secreted. Functionally, has antibacterial activity. This is Beta-defensin 30 (Defb30) from Mus musculus (Mouse).